The sequence spans 361 residues: Cyclin-D3-3 (361 aa).

This sequence belongs to the cyclin family. Cyclin D subfamily.

Promotes divisions in the guard cells (GCs) after the guard mother cells (GMC) symmetric division. This chain is Cyclin-D3-3 (CYCD3-3), found in Arabidopsis thaliana (Mouse-ear cress).